Reading from the N-terminus, the 85-residue chain is Large ribosomal subunit protein bL27 (85 aa).

This sequence belongs to the bacterial ribosomal protein bL27 family.

In Campylobacter fetus subsp. fetus (strain 82-40), this protein is Large ribosomal subunit protein bL27.